Consider the following 98-residue polypeptide: NADH-ubiquinone oxidoreductase chain 4L (98 aa).

Transmembrane regions (helical) follow at residues 1 to 21 (MIPT…GMLT), 27 to 47 (VASL…TTLI), and 61 to 81 (IILL…LISI).

This sequence belongs to the complex I subunit 4L family. As to quaternary structure, core subunit of respiratory chain NADH dehydrogenase (Complex I) which is composed of 45 different subunits.

The protein localises to the mitochondrion inner membrane. It carries out the reaction a ubiquinone + NADH + 5 H(+)(in) = a ubiquinol + NAD(+) + 4 H(+)(out). Functionally, core subunit of the mitochondrial membrane respiratory chain NADH dehydrogenase (Complex I) which catalyzes electron transfer from NADH through the respiratory chain, using ubiquinone as an electron acceptor. Part of the enzyme membrane arm which is embedded in the lipid bilayer and involved in proton translocation. The polypeptide is NADH-ubiquinone oxidoreductase chain 4L (MT-ND4L) (Macaca nigra (Celebes black macaque)).